A 216-amino-acid chain; its full sequence is Protein E4.2 (216 aa).

The chain is Protein E4.2 from Pantherophis guttatus (Corn snake).